A 72-amino-acid polypeptide reads, in one-letter code: Translation initiation factor IF-1 (72 aa).

In terms of domain architecture, S1-like spans 1 to 72 (MAGNDVIEIE…TKGRITYRHK (72 aa)).

The protein belongs to the IF-1 family. As to quaternary structure, component of the 30S ribosomal translation pre-initiation complex which assembles on the 30S ribosome in the order IF-2 and IF-3, IF-1 and N-formylmethionyl-tRNA(fMet); mRNA recruitment can occur at any time during PIC assembly.

It localises to the cytoplasm. Functionally, one of the essential components for the initiation of protein synthesis. Stabilizes the binding of IF-2 and IF-3 on the 30S subunit to which N-formylmethionyl-tRNA(fMet) subsequently binds. Helps modulate mRNA selection, yielding the 30S pre-initiation complex (PIC). Upon addition of the 50S ribosomal subunit IF-1, IF-2 and IF-3 are released leaving the mature 70S translation initiation complex. This is Translation initiation factor IF-1 from Oenococcus oeni (strain ATCC BAA-331 / PSU-1).